Here is a 268-residue protein sequence, read N- to C-terminus: tRNA pseudouridine synthase A (268 aa).

The Nucleophile role is filled by aspartate 52. Residue tyrosine 110 participates in substrate binding.

The protein belongs to the tRNA pseudouridine synthase TruA family. In terms of assembly, homodimer.

The enzyme catalyses uridine(38/39/40) in tRNA = pseudouridine(38/39/40) in tRNA. Functionally, formation of pseudouridine at positions 38, 39 and 40 in the anticodon stem and loop of transfer RNAs. The chain is tRNA pseudouridine synthase A from Prochlorococcus marinus (strain MIT 9312).